Reading from the N-terminus, the 252-residue chain is 2-succinyl-6-hydroxy-2,4-cyclohexadiene-1-carboxylate synthase (252 aa).

The protein belongs to the AB hydrolase superfamily. MenH family. In terms of assembly, monomer.

It carries out the reaction 5-enolpyruvoyl-6-hydroxy-2-succinyl-cyclohex-3-ene-1-carboxylate = (1R,6R)-6-hydroxy-2-succinyl-cyclohexa-2,4-diene-1-carboxylate + pyruvate. It participates in quinol/quinone metabolism; 1,4-dihydroxy-2-naphthoate biosynthesis; 1,4-dihydroxy-2-naphthoate from chorismate: step 3/7. Its pathway is quinol/quinone metabolism; menaquinone biosynthesis. In terms of biological role, catalyzes a proton abstraction reaction that results in 2,5-elimination of pyruvate from 2-succinyl-5-enolpyruvyl-6-hydroxy-3-cyclohexene-1-carboxylate (SEPHCHC) and the formation of 2-succinyl-6-hydroxy-2,4-cyclohexadiene-1-carboxylate (SHCHC). The polypeptide is 2-succinyl-6-hydroxy-2,4-cyclohexadiene-1-carboxylate synthase (Salmonella newport (strain SL254)).